Consider the following 114-residue polypeptide: MPCCVIKGYASANQIVEGQVLKEGCRVRFMWDQKGISWGMSLSPEGGLSFRLVPERHVQSYLKRLMITVGDDQSSFVTMTSECRISMFLFKVSISVGTLPDVVVPVERLEKLSI.

In Hordeum vulgare (Barley), this protein is Protein 4 (4).